The primary structure comprises 144 residues: D-aminoacyl-tRNA deacylase (144 aa).

The short motif at 136–137 is the Gly-cisPro motif, important for rejection of L-amino acids element; the sequence is GP.

It belongs to the DTD family. As to quaternary structure, homodimer.

It is found in the cytoplasm. It carries out the reaction glycyl-tRNA(Ala) + H2O = tRNA(Ala) + glycine + H(+). It catalyses the reaction a D-aminoacyl-tRNA + H2O = a tRNA + a D-alpha-amino acid + H(+). Its function is as follows. An aminoacyl-tRNA editing enzyme that deacylates mischarged D-aminoacyl-tRNAs. Also deacylates mischarged glycyl-tRNA(Ala), protecting cells against glycine mischarging by AlaRS. Acts via tRNA-based rather than protein-based catalysis; rejects L-amino acids rather than detecting D-amino acids in the active site. By recycling D-aminoacyl-tRNA to D-amino acids and free tRNA molecules, this enzyme counteracts the toxicity associated with the formation of D-aminoacyl-tRNA entities in vivo and helps enforce protein L-homochirality. The chain is D-aminoacyl-tRNA deacylase from Aliivibrio salmonicida (strain LFI1238) (Vibrio salmonicida (strain LFI1238)).